Reading from the N-terminus, the 278-residue chain is Small ribosomal subunit protein uS5 (278 aa).

The tract at residues Met1 to Asp43 is disordered. Over residues Gly9–Arg21 the composition is skewed to gly residues. Residues Gly22–Arg37 are compositionally biased toward basic residues. One can recognise an S5 DRBM domain in the interval Leu88 to Val151.

This sequence belongs to the universal ribosomal protein uS5 family.

Its function is as follows. Component of the ribosome, a large ribonucleoprotein complex responsible for the synthesis of proteins in the cell. The small ribosomal subunit (SSU) binds messenger RNAs (mRNAs) and translates the encoded message by selecting cognate aminoacyl-transfer RNA (tRNA) molecules. The large subunit (LSU) contains the ribosomal catalytic site termed the peptidyl transferase center (PTC), which catalyzes the formation of peptide bonds, thereby polymerizing the amino acids delivered by tRNAs into a polypeptide chain. The nascent polypeptides leave the ribosome through a tunnel in the LSU and interact with protein factors that function in enzymatic processing, targeting, and the membrane insertion of nascent chains at the exit of the ribosomal tunnel. Plays a role in the assembly and function of the 40S ribosomal subunit. Mutations in this protein affects the control of translational fidelity. Involved in nucleolar processing of pre-18S ribosomal RNA and ribosome assembly. The chain is Small ribosomal subunit protein uS5 (RPS2) from Urechis caupo (Innkeeper worm).